Reading from the N-terminus, the 428-residue chain is Aerobic C4-dicarboxylate transport protein (428 aa).

Transmembrane regions (helical) follow at residues 5–27 (LFKS…GHYY), 47–64 (MIIA…IAGM), 77–99 (ALLY…VNVV), 141–163 (VIGA…FGFA), 184–206 (VIFG…AMAF), 216–238 (LVQL…VVVL), 289–311 (VVGL…YLTM), 326–348 (IFHQ…GVTG), and 353–375 (VLAA…ILGI).

The protein belongs to the dicarboxylate/amino acid:cation symporter (DAACS) (TC 2.A.23) family.

The protein localises to the cell inner membrane. Its function is as follows. Responsible for the transport of dicarboxylates such as succinate, fumarate, and malate from the periplasm across the membrane. In Salmonella typhi, this protein is Aerobic C4-dicarboxylate transport protein.